The chain runs to 220 residues: Probable septum site-determining protein MinC (220 aa).

The protein belongs to the MinC family. In terms of assembly, interacts with MinD and FtsZ.

Cell division inhibitor that blocks the formation of polar Z ring septums. Rapidly oscillates between the poles of the cell to destabilize FtsZ filaments that have formed before they mature into polar Z rings. Prevents FtsZ polymerization. The chain is Probable septum site-determining protein MinC from Vibrio atlanticus (strain LGP32) (Vibrio splendidus (strain Mel32)).